Consider the following 266-residue polypeptide: Gasdermin bGSDM (266 aa).

Residue Cys-6 is the site of S-palmitoyl cysteine attachment. The next 4 beta stranded transmembrane spans lie at 70–86, 99–117, 163–180, and 189–205; these read ISHS…AGNF, APKL…FSFS, AIDM…DVQA, and LGGK…TISF. Residues 245–266 are C-terminal region; it reads GAAEPYLLRRGQVLIVEDMQAT.

This sequence belongs to the bacterial gasdermin family. As to quaternary structure, monomer. Forms large, homooligomeric ring-shaped pores when inserted in membranes. In terms of processing, cleavage by the adjacently encoded protease (probably ISF6_0256) predicted to occur between Glu-244 and Gly-245 relieves autoinhibition, releasing the N-terminus which initiates loss of cell integrity. Post-translationally, palmitoylation helps stabilize the inactive state; may self palmitoylate. Palmitoylation plays a significant role in pore formation.

Its subcellular location is the cytoplasm. The protein resides in the cell inner membrane. Its activity is regulated as follows. The full-length protein before cleavage is inactive: intramolecular interactions between the N-terminal domain and the C-terminal region as well as the lipid modification, mediate autoinhibition. The pyroptosis-like-inducing activity is carried by the released N-terminal domain (Gasdermin bGSDM, N-terminus). In terms of biological role, precursor of a pore-forming protein involved in defense against bacteriophages. Cleavage of this precursor by its dedicated, neighboring protease (probably ISF6_0256) releases the active moiety (gasdermin bGSDM, N-terminus) which inserts into membranes, forming pores and triggering cell death. Functionally, pore-forming protein that causes membrane permeabilization via a pyroptosis-like activity. Makes ring-like pores with an interior pore diameter of 300-400 Angstroms, when integrated in liposomes. The chain is Gasdermin bGSDM from Piscinibacter sakaiensis (Ideonella sakaiensis).